Reading from the N-terminus, the 655-residue chain is NADH-ubiquinone oxidoreductase chain 5 (655 aa).

The next 16 membrane-spanning stretches (helical) occupy residues 3-23 (NAIS…LFFG), 34-54 (MTST…YQLL), 84-104 (LTIT…IYSI), 116-136 (FFSL…GSNY), 137-157 (FVLF…ISFW), 180-200 (FFVL…YSTI), 204-224 (AYLI…IAAM), 244-264 (TPVS…YLLL), 276-296 (VLFI…LIAI), 304-322 (IIAL…AIGL), 332-354 (LLGH…HSIL), 370-390 (LPYT…MPGL), 413-433 (VVYW…MKIL), 456-476 (IYIT…GWIL), 516-536 (ISAI…AIVF), and 629-649 (LLLV…LISI).

It belongs to the complex I subunit 5 family. Complex I is composed of 37 different subunits.

Its subcellular location is the mitochondrion inner membrane. It carries out the reaction a ubiquinone + NADH + 5 H(+)(in) = a ubiquinol + NAD(+) + 4 H(+)(out). Core subunit of the mitochondrial membrane respiratory chain NADH dehydrogenase (Complex I) that is believed to belong to the minimal assembly required for catalysis. Complex I functions in the transfer of electrons from NADH to the respiratory chain. The immediate electron acceptor for the enzyme is believed to be ubiquinone. The chain is NADH-ubiquinone oxidoreductase chain 5 (ND5) from Yarrowia lipolytica (strain CLIB 122 / E 150) (Yeast).